The following is a 449-amino-acid chain: Sensor protein QseC (449 aa).

Residues 1 to 12 (MKFTQRLSLRVR) are Cytoplasmic-facing. A helical membrane pass occupies residues 13–33 (LTLIFLILASVTWLLSSFVAW). Residues 34 to 156 (KQTTDNVDEL…QEWEYREDMA (123 aa)) are Periplasmic-facing. A helical membrane pass occupies residues 157-177 (LAIVAGQLIPWLVALPIMLII). The Cytoplasmic segment spans residues 178–449 (MMVLLGRELA…QGGFEAKVSW (272 aa)). In terms of domain architecture, Histidine kinase spans 243–449 (DAAHELRSPL…QGGFEAKVSW (207 aa)). A Phosphohistidine; by autocatalysis modification is found at histidine 246.

It is found in the cell inner membrane. It carries out the reaction ATP + protein L-histidine = ADP + protein N-phospho-L-histidine.. Member of a two-component regulatory system QseB/QseC. Activates the flagella regulon by activating transcription of FlhDC. May activate QseB by phosphorylation. The chain is Sensor protein QseC (qseC) from Escherichia coli (strain K12).